Here is a 196-residue protein sequence, read N- to C-terminus: Adenylate kinase (196 aa).

9 to 17 (GIPGVGKST) contributes to the ATP binding site.

Belongs to the archaeal adenylate kinase family.

The protein localises to the cytoplasm. The enzyme catalyses AMP + ATP = 2 ADP. The polypeptide is Adenylate kinase (Thermococcus kodakarensis (strain ATCC BAA-918 / JCM 12380 / KOD1) (Pyrococcus kodakaraensis (strain KOD1))).